Here is a 651-residue protein sequence, read N- to C-terminus: MSEKLYPVLAEAKRNTLIDNATYLEWYQESVSDPDSFWAKHGRRIDWFKPFTKVKNTDFNGDVSIKWYEDGVTNVSYNCIDRHLKSRGDQVAIIWEGDNPYIDKKITYRELHENVCRLANVLKKHGVKKGDRVTIYLPMIPEAAYAMLACARIGAVHSVVFAGFSPEALAGRIVDCESTFVITADEGVRGGKPVPLKENTDTAIDIAAKQYVMVNKVLTVRRTGGKVSWGPGRDLWYHQEVASVEPTCDPEPMNAEDPLFILYTSGSTGKPKGVLHTTGGYLVYASMTHQYVFDYHDGDIYWCTADVGWVTGHSYIVYGPLANGATTLMFEGVPNFPDQGRFWEVVDKHHVNIFYTAPTAIRALMGAGDEFVTRSSRSTLRLLGSVGEPINPEAWEWYYNVVGDQRSPIVDTWWQTETGGILITPLPGATDLKPGSATRPFFGIKPELVDNEGAVIEGAVDGNLCIIDSWPGQMRTLYGDHKRFIEAYFSTYKGKYFTGDGCRRDEDGYYWITGRVDDVLNISGHRLGTAEIESALVSHHSVSEAAVVGYPHPIKGQGIYCYVTLMTGEAVQDEDALRKELTQHVRKEIGPIATPDKIQFSPGLPKTRSGKIMRRILRKIAEDEFGALGDTSTLADPGVVDDLIENRQNKK.

Residues Arg-189–Lys-192, Thr-311, and Asn-335 each bind CoA. Residues Gly-387 to Pro-389, Asp-411 to Thr-416, Asp-500, and Arg-515 each bind ATP. Ser-523 contacts CoA. An ATP-binding site is contributed by Arg-526. The Mg(2+) site is built by Val-537, His-539, and Val-542. Position 586 (Arg-586) interacts with CoA. Lys-611 is subject to N6-acetyllysine.

The protein belongs to the ATP-dependent AMP-binding enzyme family. Mg(2+) serves as cofactor. Post-translationally, acetylated. Deacetylation by the SIR2-homolog deacetylase activates the enzyme.

It catalyses the reaction acetate + ATP + CoA = acetyl-CoA + AMP + diphosphate. Functionally, catalyzes the conversion of acetate into acetyl-CoA (AcCoA), an essential intermediate at the junction of anabolic and catabolic pathways. AcsA undergoes a two-step reaction. In the first half reaction, AcsA combines acetate with ATP to form acetyl-adenylate (AcAMP) intermediate. In the second half reaction, it can then transfer the acetyl group from AcAMP to the sulfhydryl group of CoA, forming the product AcCoA. The polypeptide is Acetyl-coenzyme A synthetase (Brucella anthropi (strain ATCC 49188 / DSM 6882 / CCUG 24695 / JCM 21032 / LMG 3331 / NBRC 15819 / NCTC 12168 / Alc 37) (Ochrobactrum anthropi)).